The chain runs to 228 residues: Ephrin-A5 (228 aa).

An N-terminal signal peptide occupies residues 1-20; the sequence is MLHVEMLTLVFLVLWMCVFS. An Ephrin RBD domain is found at 29–162; the sequence is ADRYAVYWNS…KLKVFVRPTN (134 aa). A glycan (N-linked (GlcNAc...) asparagine) is linked at Asn37. 2 disulfides stabilise this stretch: Cys62/Cys102 and Cys90/Cys151. The disordered stretch occupies residues 186-205; it reads EPADDTVHESAEPSRGENAA. Positions 190–200 are enriched in basic and acidic residues; that stretch reads DTVHESAEPSR. Asn203 carries the GPI-anchor amidated asparagine lipid modification. Residues 204 to 228 constitute a propeptide, removed in mature form; that stretch reads AAQTPRIPSRLLAILLFLLAMLLTL.

It belongs to the ephrin family. Binds to EPHB2. Interacts with EPHA8; activates EPHA8. Binds to the receptor tyrosine kinases EPHA2, EPHA3 and EPHB1. Forms a ternary EFNA5-EPHA3-ADAM10 complex mediating EFNA5 extracellular domain shedding by ADAM10 which regulates the EFNA5-EPHA3 complex internalization and function.

The protein resides in the cell membrane. It localises to the membrane. Its subcellular location is the caveola. Cell surface GPI-bound ligand for Eph receptors, a family of receptor tyrosine kinases which are crucial for migration, repulsion and adhesion during neuronal, vascular and epithelial development. Binds promiscuously Eph receptors residing on adjacent cells, leading to contact-dependent bidirectional signaling into neighboring cells. The signaling pathway downstream of the receptor is referred to as forward signaling while the signaling pathway downstream of the ephrin ligand is referred to as reverse signaling. Induces compartmentalized signaling within a caveolae-like membrane microdomain when bound to the extracellular domain of its cognate receptor. This signaling event requires the activity of the Fyn tyrosine kinase. Activates the EPHA3 receptor to regulate cell-cell adhesion and cytoskeletal organization. With the receptor EPHA2 may regulate lens fiber cells shape and interactions and be important for lens transparency maintenance. May function actively to stimulate axon fasciculation. The interaction of EFNA5 with EPHA5 also mediates communication between pancreatic islet cells to regulate glucose-stimulated insulin secretion. Cognate/functional ligand for EPHA7, their interaction regulates brain development modulating cell-cell adhesion and repulsion. The protein is Ephrin-A5 (EFNA5) of Homo sapiens (Human).